The sequence spans 212 residues: Uracil phosphoribosyltransferase (212 aa).

5-phospho-alpha-D-ribose 1-diphosphate is bound by residues Arg78, Arg103, and 130-138 (DPMLATGSS). Residues Ile193 and 198 to 200 (GDA) each bind uracil. Position 199 (Asp199) interacts with 5-phospho-alpha-D-ribose 1-diphosphate.

This sequence belongs to the UPRTase family. Mg(2+) is required as a cofactor.

It catalyses the reaction UMP + diphosphate = 5-phospho-alpha-D-ribose 1-diphosphate + uracil. The protein operates within pyrimidine metabolism; UMP biosynthesis via salvage pathway; UMP from uracil: step 1/1. Allosterically activated by GTP. Its function is as follows. Catalyzes the conversion of uracil and 5-phospho-alpha-D-ribose 1-diphosphate (PRPP) to UMP and diphosphate. In Pseudomonas fluorescens (strain ATCC BAA-477 / NRRL B-23932 / Pf-5), this protein is Uracil phosphoribosyltransferase.